Reading from the N-terminus, the 102-residue chain is Small ribosomal subunit protein uS10 (102 aa).

The protein belongs to the universal ribosomal protein uS10 family. As to quaternary structure, part of the 30S ribosomal subunit.

Its function is as follows. Involved in the binding of tRNA to the ribosomes. The chain is Small ribosomal subunit protein uS10 from Leifsonia xyli subsp. xyli (strain CTCB07).